Here is a 154-residue protein sequence, read N- to C-terminus: Pro-corazonin (154 aa).

Positions 1 to 19 (MLRLLLLPLFLFTLSMCMG) are cleaved as a signal peptide. At glutamine 20 the chain carries Pyrrolidone carboxylic acid. Asparagine 30 bears the Asparagine amide mark. Residues 70 to 154 (LERCLSQLQR…SAEPNVFGKH (85 aa)) constitute a propeptide that is removed on maturation.

The protein belongs to the corazonin family. As to expression, expression is restricted to 24 neurons in the larval CNS (8 in the brain and 16 in the ventral nerve cord) and 12-16 neurons in the pars lateralis of the adult brain.

It localises to the secreted. Its function is as follows. Cardioactive peptide. Corazonin is probably involved in the physiological regulation of the heart beat. Clock (Clk) and cycle (cyc) proteins negatively regulate Crz transcription in a cell-specific manner. The sequence is that of Pro-corazonin (Crz) from Drosophila erecta (Fruit fly).